Here is a 341-residue protein sequence, read N- to C-terminus: Phosphate acyltransferase (341 aa).

This sequence belongs to the PlsX family. As to quaternary structure, homodimer. Probably interacts with PlsY.

It is found in the cytoplasm. The catalysed reaction is a fatty acyl-[ACP] + phosphate = an acyl phosphate + holo-[ACP]. It functions in the pathway lipid metabolism; phospholipid metabolism. In terms of biological role, catalyzes the reversible formation of acyl-phosphate (acyl-PO(4)) from acyl-[acyl-carrier-protein] (acyl-ACP). This enzyme utilizes acyl-ACP as fatty acyl donor, but not acyl-CoA. The polypeptide is Phosphate acyltransferase (Ehrlichia ruminantium (strain Gardel)).